We begin with the raw amino-acid sequence, 355 residues long: GTPase Obg (355 aa).

The Obg domain maps to 1 to 159 (MKLVDEAEIL…RLLKLELKLL (159 aa)). In terms of domain architecture, OBG-type G spans 160–342 (ADVGLLGFPN…IMKDVMAFFD (183 aa)). Residues 166 to 173 (GFPNAGKS), 191 to 195 (FTTLY), 213 to 216 (DVPG), 292 to 295 (NKAD), and 323 to 325 (SAL) each bind GTP. 2 residues coordinate Mg(2+): S173 and T193.

The protein belongs to the TRAFAC class OBG-HflX-like GTPase superfamily. OBG GTPase family. As to quaternary structure, monomer. Mg(2+) is required as a cofactor.

The protein resides in the cytoplasm. An essential GTPase which binds GTP, GDP and possibly (p)ppGpp with moderate affinity, with high nucleotide exchange rates and a fairly low GTP hydrolysis rate. Plays a role in control of the cell cycle, stress response, ribosome biogenesis and in those bacteria that undergo differentiation, in morphogenesis control. The sequence is that of GTPase Obg from Xanthomonas axonopodis pv. citri (strain 306).